A 230-amino-acid polypeptide reads, in one-letter code: Enolase-phosphatase E1 (230 aa).

This sequence belongs to the HAD-like hydrolase superfamily. MasA/MtnC family. As to quaternary structure, monomer. Mg(2+) is required as a cofactor.

The enzyme catalyses 5-methylsulfanyl-2,3-dioxopentyl phosphate + H2O = 1,2-dihydroxy-5-(methylsulfanyl)pent-1-en-3-one + phosphate. It participates in amino-acid biosynthesis; L-methionine biosynthesis via salvage pathway; L-methionine from S-methyl-5-thio-alpha-D-ribose 1-phosphate: step 3/6. The protein operates within amino-acid biosynthesis; L-methionine biosynthesis via salvage pathway; L-methionine from S-methyl-5-thio-alpha-D-ribose 1-phosphate: step 4/6. Its function is as follows. Bifunctional enzyme that catalyzes the enolization of 2,3-diketo-5-methylthiopentyl-1-phosphate (DK-MTP-1-P) into the intermediate 2-hydroxy-3-keto-5-methylthiopentenyl-1-phosphate (HK-MTPenyl-1-P), which is then dephosphorylated to form the acireductone 1,2-dihydroxy-3-keto-5-methylthiopentene (DHK-MTPene). This Marinobacter nauticus (strain ATCC 700491 / DSM 11845 / VT8) (Marinobacter aquaeolei) protein is Enolase-phosphatase E1.